The following is a 346-amino-acid chain: Phosphoribosylformylglycinamidine cyclo-ligase (346 aa).

Belongs to the AIR synthase family.

Its subcellular location is the cytoplasm. It carries out the reaction 2-formamido-N(1)-(5-O-phospho-beta-D-ribosyl)acetamidine + ATP = 5-amino-1-(5-phospho-beta-D-ribosyl)imidazole + ADP + phosphate + H(+). The protein operates within purine metabolism; IMP biosynthesis via de novo pathway; 5-amino-1-(5-phospho-D-ribosyl)imidazole from N(2)-formyl-N(1)-(5-phospho-D-ribosyl)glycinamide: step 2/2. This is Phosphoribosylformylglycinamidine cyclo-ligase from Proteus mirabilis (strain HI4320).